The chain runs to 195 residues: Imidazoleglycerol-phosphate dehydratase (195 aa).

Belongs to the imidazoleglycerol-phosphate dehydratase family.

The protein resides in the cytoplasm. The enzyme catalyses D-erythro-1-(imidazol-4-yl)glycerol 3-phosphate = 3-(imidazol-4-yl)-2-oxopropyl phosphate + H2O. Its pathway is amino-acid biosynthesis; L-histidine biosynthesis; L-histidine from 5-phospho-alpha-D-ribose 1-diphosphate: step 6/9. The polypeptide is Imidazoleglycerol-phosphate dehydratase (Paraburkholderia xenovorans (strain LB400)).